Consider the following 261-residue polypeptide: DNA repair protein RecO (261 aa).

It belongs to the RecO family.

In terms of biological role, involved in DNA repair and RecF pathway recombination. The protein is DNA repair protein RecO of Mycobacteroides abscessus (strain ATCC 19977 / DSM 44196 / CCUG 20993 / CIP 104536 / JCM 13569 / NCTC 13031 / TMC 1543 / L948) (Mycobacterium abscessus).